Consider the following 295-residue polypeptide: Acetyl-coenzyme A carboxylase carboxyl transferase subunit beta (295 aa).

Residues 1 to 20 (MSWLSKLMPSGIRTENTPAK) form a disordered region. The 268-residue stretch at 28 to 295 (LWEKCSNCGS…QPHPQDADAA (268 aa)) folds into the CoA carboxyltransferase N-terminal domain. Zn(2+) is bound by residues cysteine 32, cysteine 35, cysteine 51, and cysteine 54. The C4-type zinc-finger motif lies at 32-54 (CSNCGSALYGPELEENLEVCPKC).

Belongs to the AccD/PCCB family. In terms of assembly, acetyl-CoA carboxylase is a heterohexamer composed of biotin carboxyl carrier protein (AccB), biotin carboxylase (AccC) and two subunits each of ACCase subunit alpha (AccA) and ACCase subunit beta (AccD). Zn(2+) is required as a cofactor.

It localises to the cytoplasm. It catalyses the reaction N(6)-carboxybiotinyl-L-lysyl-[protein] + acetyl-CoA = N(6)-biotinyl-L-lysyl-[protein] + malonyl-CoA. The protein operates within lipid metabolism; malonyl-CoA biosynthesis; malonyl-CoA from acetyl-CoA: step 1/1. Functionally, component of the acetyl coenzyme A carboxylase (ACC) complex. Biotin carboxylase (BC) catalyzes the carboxylation of biotin on its carrier protein (BCCP) and then the CO(2) group is transferred by the transcarboxylase to acetyl-CoA to form malonyl-CoA. In Xanthomonas oryzae pv. oryzae (strain MAFF 311018), this protein is Acetyl-coenzyme A carboxylase carboxyl transferase subunit beta.